Reading from the N-terminus, the 41-residue chain is Pi-stichotoxin-Hcr5c (41 aa).

3 disulfides stabilise this stretch: C4–C37, C6–C30, and C20–C38.

The protein belongs to the sea anemone type 3 (BDS) potassium channel toxin family.

The protein resides in the secreted. The protein localises to the nematocyst. Its function is as follows. Weakly and reversibly inhibits rat homomeric ASIC1 (isoform ASIC1a) (IC(50)=4.95 uM), and ASIC3 (IC(50)=17 uM). ASIC1a current inhibition and ASIC3 transient current inhibition are not complete, and reach a maximum of 70% inhibition and 80%, respectively. The chain is Pi-stichotoxin-Hcr5c from Radianthus crispa (Leathery sea anemone).